Reading from the N-terminus, the 446-residue chain is Signal recognition particle protein (446 aa).

GTP contacts are provided by residues 106-113 (GLQGSGKT), 188-192 (DTAGR), and 246-249 (SKLD).

It belongs to the GTP-binding SRP family. SRP54 subfamily. In terms of assembly, part of the signal recognition particle protein translocation system, which is composed of SRP and FtsY.

It is found in the cytoplasm. The catalysed reaction is GTP + H2O = GDP + phosphate + H(+). Functionally, involved in targeting and insertion of nascent membrane proteins into the cytoplasmic membrane. Binds to the hydrophobic signal sequence of the ribosome-nascent chain (RNC) as it emerges from the ribosomes. The SRP-RNC complex is then targeted to the cytoplasmic membrane where it interacts with the SRP receptor FtsY. The protein is Signal recognition particle protein of Mycoplasma genitalium (strain ATCC 33530 / DSM 19775 / NCTC 10195 / G37) (Mycoplasmoides genitalium).